A 1070-amino-acid polypeptide reads, in one-letter code: DNA-directed RNA polymerase subunit beta (1070 aa).

The protein belongs to the RNA polymerase beta chain family. In terms of assembly, in plastids the minimal PEP RNA polymerase catalytic core is composed of four subunits: alpha, beta, beta', and beta''. When a (nuclear-encoded) sigma factor is associated with the core the holoenzyme is formed, which can initiate transcription.

The protein resides in the plastid. Its subcellular location is the chloroplast. It carries out the reaction RNA(n) + a ribonucleoside 5'-triphosphate = RNA(n+1) + diphosphate. DNA-dependent RNA polymerase catalyzes the transcription of DNA into RNA using the four ribonucleoside triphosphates as substrates. In Platanus occidentalis (Sycamore), this protein is DNA-directed RNA polymerase subunit beta.